Reading from the N-terminus, the 576-residue chain is MAGUK p55 subfamily member 7 (576 aa).

L27 domains follow at residues 10–64 and 65–122; these read SEMG…EDCA and PTPV…YDPE. In terms of domain architecture, PDZ spans 139 to 220; that stretch reads IIRLVKNKEP…AITFKVVPGI (82 aa). The SH3 domain occupies 228–298; that stretch reads EPKMFIKALF…PSKHFQERRL (71 aa). The Guanylate kinase-like domain maps to 368–560; the sequence is HRLVVLVGPT…AFSELKQALK (193 aa).

The protein belongs to the MAGUK family.

The protein localises to the membrane. Its subcellular location is the cell junction. It is found in the tight junction. It localises to the adherens junction. In terms of biological role, acts as an important adapter that promotes epithelial cell polarity and tight junction formation. Involved in the assembly of protein complexes at sites of cell-cell contact. The polypeptide is MAGUK p55 subfamily member 7 (mpp7) (Danio rerio (Zebrafish)).